A 289-amino-acid polypeptide reads, in one-letter code: Probable protein phosphatase 2C 39 (289 aa).

The region spanning 41-288 (THGFHLVKGK…DDISVVVVKF (248 aa)) is the PPM-type phosphatase domain. Mn(2+) contacts are provided by Asp78, Gly79, Asp240, and Asp279.

This sequence belongs to the PP2C family. The cofactor is Mg(2+). It depends on Mn(2+) as a cofactor.

It catalyses the reaction O-phospho-L-seryl-[protein] + H2O = L-seryl-[protein] + phosphate. The enzyme catalyses O-phospho-L-threonyl-[protein] + H2O = L-threonyl-[protein] + phosphate. This chain is Probable protein phosphatase 2C 39, found in Arabidopsis thaliana (Mouse-ear cress).